The primary structure comprises 407 residues: Queuine tRNA-ribosyltransferase-like protein (407 aa).

The protein belongs to the queuine tRNA-ribosyltransferase family.

The chain is Queuine tRNA-ribosyltransferase-like protein from Plasmodium falciparum (isolate 3D7).